Reading from the N-terminus, the 320-residue chain is Protein PR73 (320 aa).

Over methionine 1–aspartate 44 the chain is Cytoplasmic. The helical transmembrane segment at isoleucine 45–valine 65 threads the bilayer. Residues alanine 66 to aspartate 320 are Extracellular-facing. Asparagine 80, asparagine 81, asparagine 90, asparagine 94, asparagine 132, and asparagine 147 each carry an N-linked (GlcNAc...) asparagine; by host glycan.

This sequence belongs to the mouse mammary tumor virus PR73 superantigen family.

The protein resides in the membrane. Its function is as follows. Superantigen. The polypeptide is Protein PR73 (Mus musculus (Mouse)).